Reading from the N-terminus, the 375-residue chain is UDP-N-acetylglucosamine--N-acetylmuramyl-(pentapeptide) pyrophosphoryl-undecaprenol N-acetylglucosamine transferase (375 aa).

UDP-N-acetyl-alpha-D-glucosamine-binding positions include 13–15, Asn124, Arg165, Ser193, and Gln294; that span reads TGG.

Belongs to the glycosyltransferase 28 family. MurG subfamily.

It localises to the cell inner membrane. The catalysed reaction is di-trans,octa-cis-undecaprenyl diphospho-N-acetyl-alpha-D-muramoyl-L-alanyl-D-glutamyl-meso-2,6-diaminopimeloyl-D-alanyl-D-alanine + UDP-N-acetyl-alpha-D-glucosamine = di-trans,octa-cis-undecaprenyl diphospho-[N-acetyl-alpha-D-glucosaminyl-(1-&gt;4)]-N-acetyl-alpha-D-muramoyl-L-alanyl-D-glutamyl-meso-2,6-diaminopimeloyl-D-alanyl-D-alanine + UDP + H(+). Its pathway is cell wall biogenesis; peptidoglycan biosynthesis. Functionally, cell wall formation. Catalyzes the transfer of a GlcNAc subunit on undecaprenyl-pyrophosphoryl-MurNAc-pentapeptide (lipid intermediate I) to form undecaprenyl-pyrophosphoryl-MurNAc-(pentapeptide)GlcNAc (lipid intermediate II). The sequence is that of UDP-N-acetylglucosamine--N-acetylmuramyl-(pentapeptide) pyrophosphoryl-undecaprenol N-acetylglucosamine transferase from Chelativorans sp. (strain BNC1).